Reading from the N-terminus, the 260-residue chain is tRNA pseudouridine synthase A (260 aa).

Asp52 acts as the Nucleophile in catalysis. Tyr111 contacts substrate.

It belongs to the tRNA pseudouridine synthase TruA family. Homodimer.

It carries out the reaction uridine(38/39/40) in tRNA = pseudouridine(38/39/40) in tRNA. Its function is as follows. Formation of pseudouridine at positions 38, 39 and 40 in the anticodon stem and loop of transfer RNAs. This is tRNA pseudouridine synthase A from Roseobacter denitrificans (strain ATCC 33942 / OCh 114) (Erythrobacter sp. (strain OCh 114)).